Here is a 333-residue protein sequence, read N- to C-terminus: Phosphate acyltransferase (333 aa).

This sequence belongs to the PlsX family. In terms of assembly, homodimer. Probably interacts with PlsY.

The protein resides in the cytoplasm. The catalysed reaction is a fatty acyl-[ACP] + phosphate = an acyl phosphate + holo-[ACP]. It functions in the pathway lipid metabolism; phospholipid metabolism. Its function is as follows. Catalyzes the reversible formation of acyl-phosphate (acyl-PO(4)) from acyl-[acyl-carrier-protein] (acyl-ACP). This enzyme utilizes acyl-ACP as fatty acyl donor, but not acyl-CoA. This is Phosphate acyltransferase from Lactobacillus acidophilus (strain ATCC 700396 / NCK56 / N2 / NCFM).